Here is a 122-residue protein sequence, read N- to C-terminus: MSTLSRKQQTQKRHRRLRRHLSGTADRPRLAVFRSNSHIYAQVIDDAAQSTLCSASTLDKDLRTSLTATGSTCDASVAVGELVAKRALAKGIQQVVFDRGGNLYHGRVKALADAAREAGLQF.

A disordered region spans residues 1-24 (MSTLSRKQQTQKRHRRLRRHLSGT). Over residues 9-21 (QTQKRHRRLRRHL) the composition is skewed to basic residues.

It belongs to the universal ribosomal protein uL18 family. As to quaternary structure, part of the 50S ribosomal subunit; part of the 5S rRNA/L5/L18/L25 subcomplex. Contacts the 5S and 23S rRNAs.

Functionally, this is one of the proteins that bind and probably mediate the attachment of the 5S RNA into the large ribosomal subunit, where it forms part of the central protuberance. The polypeptide is Large ribosomal subunit protein uL18 (Synechococcus sp. (strain WH7803)).